The chain runs to 343 residues: Heat-inducible transcription repressor HrcA (343 aa).

It belongs to the HrcA family.

Its function is as follows. Negative regulator of class I heat shock genes (grpE-dnaK-dnaJ and groELS operons). Prevents heat-shock induction of these operons. This Mycolicibacterium paratuberculosis (strain ATCC BAA-968 / K-10) (Mycobacterium paratuberculosis) protein is Heat-inducible transcription repressor HrcA.